Consider the following 204-residue polypeptide: Pre-mRNA leakage protein 1 (204 aa).

An FHA domain is found at 104-172; sequence YLVGRELGHS…NGTCLNNVVI (69 aa).

Belongs to the pre-mRNA retention and splicing (RES) complex composed of at least BUD13, IST3 and PML1.

Its subcellular location is the cytoplasm. The protein localises to the nucleus. In terms of biological role, required for efficient splicing and pre-mRNA nuclear retention. This Saccharomyces cerevisiae (strain ATCC 204508 / S288c) (Baker's yeast) protein is Pre-mRNA leakage protein 1 (PML1).